We begin with the raw amino-acid sequence, 182 residues long: MGILFTRMFSSVFGNKEARILVLGLDNAGKTTILYRLQMGEVVSTIPTIGFNVETVQYNNIKFQVWDLGGQTSIRPYWRCYFPNTQAVIYVVDSSDTDRIGVAKEEFHAILEEDELKGAVVLIFANKQDLPGALDDAAVTEALELHKIKSRQWAIFKTCAVKGEGLFEGLDWLSNTLKSGSG.

Residue Gly2 is the site of N-myristoyl glycine attachment. GTP contacts are provided by residues 24-31 (GLDNAGKT), 67-71 (DLGGQ), and 126-129 (NKQD).

The protein belongs to the small GTPase superfamily. Arf family. Interacts with GRIP; but preferentially when bound to GTP.

Its subcellular location is the golgi apparatus. In terms of biological role, GTP-binding protein involved in protein trafficking; may modulate vesicle budding and uncoating within the Golgi apparatus. The sequence is that of ADP-ribosylation factor 3 (ARF3) from Arabidopsis thaliana (Mouse-ear cress).